The sequence spans 405 residues: MPTQSTSKRLWRDVQVFDGLVQLSEAMTVLVEDGRIAGLWPAREFNEAHAQGAACAGRGGVLTPGLVDCHTHLVYAGNRAGEFEQRLEGVSYEEIARAGGGILSSVRATRAASEDELIAASLPRLDALLADGVTTLEIKSGYGLTVADELKMLRVARRLGQLRPVRVITTLLGAHALPPEYAGRADDYVSLVCDEMIPAAAAEGLADAVDVFCEGIGFSPAQCERIYQAAQAHGLAIKAHAEQLSNLGGSALAARYGALSADHIEYLDEAGVRAMAEAGTVAVLLPGAFHVLRETQLPPIELLRQYGVPMAVASDANPGTSPICMPTLMANLACTLFRLTPREALSGMTAQAARALGRLDLGRIAVGAPADLCLWDIQQPAELAYAVQAGRLRQRVFKGEVVYAR.

The Fe(3+) site is built by His-70 and His-72. Positions 70 and 72 each coordinate Zn(2+). 3 residues coordinate 4-imidazolone-5-propanoate: Arg-79, Tyr-142, and His-175. Tyr-142 is an N-formimidoyl-L-glutamate binding site. Position 240 (His-240) interacts with Fe(3+). His-240 provides a ligand contact to Zn(2+). Residue Gln-243 participates in 4-imidazolone-5-propanoate binding. A Fe(3+)-binding site is contributed by Asp-315. Asp-315 serves as a coordination point for Zn(2+). 2 residues coordinate N-formimidoyl-L-glutamate: Asn-317 and Gly-319. Thr-320 lines the 4-imidazolone-5-propanoate pocket.

It belongs to the metallo-dependent hydrolases superfamily. HutI family. Zn(2+) serves as cofactor. The cofactor is Fe(3+).

It localises to the cytoplasm. The catalysed reaction is 4-imidazolone-5-propanoate + H2O = N-formimidoyl-L-glutamate. The protein operates within amino-acid degradation; L-histidine degradation into L-glutamate; N-formimidoyl-L-glutamate from L-histidine: step 3/3. Functionally, catalyzes the hydrolytic cleavage of the carbon-nitrogen bond in imidazolone-5-propanoate to yield N-formimidoyl-L-glutamate. It is the third step in the universal histidine degradation pathway. In Ectopseudomonas mendocina (strain ymp) (Pseudomonas mendocina), this protein is Imidazolonepropionase.